Consider the following 134-residue polypeptide: Small ribosomal subunit protein uS11 (134 aa).

This sequence belongs to the universal ribosomal protein uS11 family. As to quaternary structure, part of the 30S ribosomal subunit. Interacts with proteins S7 and S18. Binds to IF-3.

In terms of biological role, located on the platform of the 30S subunit, it bridges several disparate RNA helices of the 16S rRNA. Forms part of the Shine-Dalgarno cleft in the 70S ribosome. This chain is Small ribosomal subunit protein uS11, found in Paracidovorax citrulli (strain AAC00-1) (Acidovorax citrulli).